Consider the following 480-residue polypeptide: EGF-like repeat and discoidin I-like domain-containing protein 3 (480 aa).

Positions methionine 1–glycine 23 are cleaved as a signal peptide. Residues aspartate 24 to serine 60 enclose the EGF-like 1 domain. Disulfide bonds link cysteine 26-cysteine 37, cysteine 31-cysteine 48, and cysteine 50-cysteine 59. A glycan (O-linked (GalNAc...) threonine) is linked at threonine 73. 2 EGF-like domains span residues serine 74 to glutamine 117 and asparagine 119 to glutamine 155. 3 disulfide bridges follow: cysteine 78–cysteine 89, cysteine 83–cysteine 105, and cysteine 107–cysteine 116. Threonine 88 carries an O-linked (Fuc...) threonine glycan. A Cell attachment site motif is present at residues arginine 96 to aspartate 98. 3 residues coordinate Ca(2+): asparagine 119, isoleucine 120, and glutamate 122. Disulfide bonds link cysteine 123–cysteine 134, cysteine 128–cysteine 143, cysteine 145–cysteine 154, cysteine 158–cysteine 314, cysteine 301–cysteine 305, and cysteine 319–cysteine 476. Ca(2+)-binding residues include aspartate 136 and leucine 137. An N-linked (GlcNAc...) asparagine glycan is attached at asparagine 140. 2 F5/8 type C domains span residues cysteine 158–cysteine 314 and cysteine 319–cysteine 476.

Expressed in angioblasts and early endothelial cells. By embryonic day 13.5, also expressed in a restricted group of non-endothelial cells including chondrocytes and retinal neurons.

It is found in the secreted. In terms of biological role, promotes adhesion of endothelial cells through interaction with the alpha-v/beta-3 integrin receptor. Inhibits formation of vascular-like structures. May be involved in regulation of vascular morphogenesis of remodeling in embryonic development. This is EGF-like repeat and discoidin I-like domain-containing protein 3 (Edil3) from Mus musculus (Mouse).